The sequence spans 2359 residues: Pre-mRNA-processing-splicing factor 8B (2359 aa).

Residues 1–50 (MWNIDGTSLAPPGTDGSRMQTPSHPADHPSYTAPSNRNTPTVPTPEDAEA) form a disordered region. Over residues 32-41 (TAPSNRNTPT) the composition is skewed to polar residues. The 132-residue stretch at 2129-2260 (TYIMPKNILK…LTSYKLTQAG (132 aa)) folds into the MPN domain.

It localises to the nucleus. Its function is as follows. Functions as a scaffold that mediates the ordered assembly of spliceosomal proteins and snRNAs. Required for the assembly of the U4/U6-U5 tri-snRNP complex. The protein is Pre-mRNA-processing-splicing factor 8B of Arabidopsis thaliana (Mouse-ear cress).